We begin with the raw amino-acid sequence, 128 residues long: MRFTLMVTGPAYGTQQASSALQFAKALLAEGHSLESVFFYREGVYNANQFTSPASDEFDLVRAWQQLHDENGVALHICVAAALRRGVTDENEARAQGLPGANLQPGFQLSGLGALAEAALTCDRVVEF.

Cys-78 acts as the Cysteine persulfide intermediate in catalysis.

It belongs to the DsrE/TusD family. As to quaternary structure, heterohexamer, formed by a dimer of trimers. The hexameric TusBCD complex contains 2 copies each of TusB, TusC and TusD. The TusBCD complex interacts with TusE.

It is found in the cytoplasm. Functionally, part of a sulfur-relay system required for 2-thiolation of 5-methylaminomethyl-2-thiouridine (mnm(5)s(2)U) at tRNA wobble positions. Accepts sulfur from TusA and transfers it in turn to TusE. This Cronobacter sakazakii (strain ATCC BAA-894) (Enterobacter sakazakii) protein is Sulfurtransferase TusD.